Here is a 351-residue protein sequence, read N- to C-terminus: Biotin synthase (351 aa).

Positions 44 to 262 (NRVQVSTLLS…LAVARILMPQ (219 aa)) constitute a Radical SAM core domain. Residues Cys59, Cys63, and Cys66 each coordinate [4Fe-4S] cluster. Cys103, Cys134, Cys194, and Arg266 together coordinate [2Fe-2S] cluster.

It belongs to the radical SAM superfamily. Biotin synthase family. As to quaternary structure, homodimer. [4Fe-4S] cluster serves as cofactor. Requires [2Fe-2S] cluster as cofactor.

The enzyme catalyses (4R,5S)-dethiobiotin + (sulfur carrier)-SH + 2 reduced [2Fe-2S]-[ferredoxin] + 2 S-adenosyl-L-methionine = (sulfur carrier)-H + biotin + 2 5'-deoxyadenosine + 2 L-methionine + 2 oxidized [2Fe-2S]-[ferredoxin]. It functions in the pathway cofactor biosynthesis; biotin biosynthesis; biotin from 7,8-diaminononanoate: step 2/2. Catalyzes the conversion of dethiobiotin (DTB) to biotin by the insertion of a sulfur atom into dethiobiotin via a radical-based mechanism. The sequence is that of Biotin synthase from Pseudomonas fluorescens (strain Pf0-1).